Here is a 444-residue protein sequence, read N- to C-terminus: Multidrug resistance protein MdtA (444 aa).

An N-terminal signal peptide occupies residues 1 to 20 (MKSQSKRTSRLFVFVGGVVA). Polar residues predominate over residues 37–52 (NNTSGAQQSARGQDTS). Disordered stretches follow at residues 37–60 (NNTSGAQQSARGQDTSHGGRRNTP) and 398–444 (TPRS…AEKS). The segment covering 406–419 (ANPASAEKAAAEAE) has biased composition (low complexity). The segment covering 435–444 (ARSTTAAEKS) has biased composition (polar residues).

The protein belongs to the membrane fusion protein (MFP) (TC 8.A.1) family. As to quaternary structure, part of a tripartite efflux system composed of MdtA, MdtB and MdtC.

The protein resides in the cell inner membrane. This chain is Multidrug resistance protein MdtA, found in Yersinia pseudotuberculosis serotype O:1b (strain IP 31758).